A 152-amino-acid polypeptide reads, in one-letter code: Nucleoside diphosphate kinase (152 aa).

Lys-11, Phe-59, Arg-87, Thr-93, Arg-104, and Asn-114 together coordinate ATP. Catalysis depends on His-117, which acts as the Pros-phosphohistidine intermediate.

This sequence belongs to the NDK family. As to quaternary structure, homotetramer. Mg(2+) is required as a cofactor.

The protein resides in the cytoplasm. It carries out the reaction a 2'-deoxyribonucleoside 5'-diphosphate + ATP = a 2'-deoxyribonucleoside 5'-triphosphate + ADP. The catalysed reaction is a ribonucleoside 5'-diphosphate + ATP = a ribonucleoside 5'-triphosphate + ADP. In terms of biological role, major role in the synthesis of nucleoside triphosphates other than ATP. The ATP gamma phosphate is transferred to the NDP beta phosphate via a ping-pong mechanism, using a phosphorylated active-site intermediate. The sequence is that of Nucleoside diphosphate kinase from Prochlorococcus marinus (strain MIT 9301).